The chain runs to 99 residues: Cytochrome c2 iso-1 (99 aa).

Positions 10, 13, 14, and 75 each coordinate heme c.

This sequence belongs to the cytochrome c family. Binds 1 heme c group covalently per subunit.

In terms of biological role, cytochrome c2 is found mainly in purple, non-sulfur, photosynthetic bacteria where it functions as the electron donor to the oxidized bacteriochlorophyll in the photophosphorylation pathway. However, it may also have a role in the respiratory chain and is found in some non-photosynthetic bacteria. The polypeptide is Cytochrome c2 iso-1 (Magnetospirillum fulvum (Rhodospirillum fulvum)).